The following is a 562-amino-acid chain: MFPLIILISFSFTFLSASATSGAGEGVANLSTCLINHNVHNFSMYPTSRNYFNLLDFSLQNLRFAASNMPKPTVIILPNSKEELVSTILCCRQTSYEIRVRCGGHSYEGTSSVSFDGSPFVIIDLMKLDDVSVDLDSETAWAQGGATIGQIYYAIAKASDVHAFSAGSGPTVGSGGHISGGGFGLLSRKFGVAADSVVDALLIDADGRLLDRKAMGEDVFWAIRGGGGGNWGIIYAWKIRLVKVPKIVTTFKISKPGSKQYVAPLLYKWQIVAPNLADDFTLGVQMIPIDLPADMKYGNPTPIEICPQFNGLYLGPKTEAVSILNEAFPELNVKNDDAKEMTWIESALFFSDLDNIFGNSSDDISHLKERYLGVKICFKGKSDYVKTPFSMDGIMTALVEHEKNPNAFLVFDPYGGAMDKISAQAIAFPHRKGNLFAIQYYAQWNEEDDAKSNEHIEWIRGFYNKMAPFVSSSPRGAYVNYLDMDLGMNMDDDYLLRNASSRYSSSVDAVERARAWGEKYFLNNYDRLVKAKTKIDPLNVFRHEQSIPPTLGSTQEHNYSSE.

The first 19 residues, 1-19, serve as a signal peptide directing secretion; that stretch reads MFPLIILISFSFTFLSASA. N-linked (GlcNAc...) asparagine glycosylation is found at asparagine 29 and asparagine 41. Cysteine 33 and cysteine 90 form a disulfide bridge. The region spanning 68-244 is the FAD-binding PCMH-type domain; it reads NMPKPTVIIL…YAWKIRLVKV (177 aa). Histidine 105 is subject to Pros-8alpha-FAD histidine. N-linked (GlcNAc...) asparagine glycosylation is found at asparagine 359, asparagine 498, and asparagine 558.

The protein belongs to the oxygen-dependent FAD-linked oxidoreductase family. It depends on FAD as a cofactor. Mostly expressed in roots.

It localises to the vacuole. Its pathway is alkaloid biosynthesis; nicotine biosynthesis. Functionally, involved in the biosynthesis of pyridine alkaloid natural products, leading mainly to the production of anabasine, anatabine, nicotine and nornicotine, effective deterrents against herbivores with antiparasitic and pesticide properties (neurotoxins); nornicotine serves as the precursor in the synthesis of the carcinogen compound N'-nitrosonornicotine (NNN). Catalyzes a late oxidation step subsequent to the pyridine ring condensation reaction in the biosynthesis of alkaloids. The sequence is that of Berberine bridge enzyme-like C-1 from Nicotiana tabacum (Common tobacco).